Here is a 100-residue protein sequence, read N- to C-terminus: Integration host factor subunit alpha (100 aa).

Residues 50 to 70 (GNFQLRDKPQRPGRNPKTGEE) are disordered.

It belongs to the bacterial histone-like protein family. Heterodimer of an alpha and a beta chain.

Its function is as follows. This protein is one of the two subunits of integration host factor, a specific DNA-binding protein that functions in genetic recombination as well as in transcriptional and translational control. The sequence is that of Integration host factor subunit alpha from Chromobacterium violaceum (strain ATCC 12472 / DSM 30191 / JCM 1249 / CCUG 213 / NBRC 12614 / NCIMB 9131 / NCTC 9757 / MK).